The following is a 369-amino-acid chain: Probable dual-specificity RNA methyltransferase RlmN (369 aa).

Glu108 acts as the Proton acceptor in catalysis. One can recognise a Radical SAM core domain in the interval 114–352 (YPDRATLCIS…CTVRDTKGQE (239 aa)). Cys121 and Cys357 are disulfide-bonded. Positions 128, 132, and 135 each coordinate [4Fe-4S] cluster. S-adenosyl-L-methionine contacts are provided by residues 178 to 179 (GE), Ser212, 235 to 237 (SLH), and Asn314. Cys357 functions as the S-methylcysteine intermediate in the catalytic mechanism.

It belongs to the radical SAM superfamily. RlmN family. [4Fe-4S] cluster is required as a cofactor.

It localises to the cytoplasm. The catalysed reaction is adenosine(2503) in 23S rRNA + 2 reduced [2Fe-2S]-[ferredoxin] + 2 S-adenosyl-L-methionine = 2-methyladenosine(2503) in 23S rRNA + 5'-deoxyadenosine + L-methionine + 2 oxidized [2Fe-2S]-[ferredoxin] + S-adenosyl-L-homocysteine. The enzyme catalyses adenosine(37) in tRNA + 2 reduced [2Fe-2S]-[ferredoxin] + 2 S-adenosyl-L-methionine = 2-methyladenosine(37) in tRNA + 5'-deoxyadenosine + L-methionine + 2 oxidized [2Fe-2S]-[ferredoxin] + S-adenosyl-L-homocysteine. Its function is as follows. Specifically methylates position 2 of adenine 2503 in 23S rRNA and position 2 of adenine 37 in tRNAs. This chain is Probable dual-specificity RNA methyltransferase RlmN, found in Corynebacterium efficiens (strain DSM 44549 / YS-314 / AJ 12310 / JCM 11189 / NBRC 100395).